A 1070-amino-acid chain; its full sequence is MLQNGNEGMSTIPGFSQIQFEGFCRFINQGLTEEFHKFQKIEDRDQEIEFQLFVETYQLVEPLITERDAVYESLTYSSELYVPAVLIWKTGRNMQEQTVFIGNIPIMNSFGTSIVNGIYRIVINQIVQSPGIYYRSELEHNGVSVYTSTIISDWGGRSELEIDRKARIWARVSRKQKISILVLSSAMGSNIREILDNVCYPEIFLSFPNDKEKKKIGSKENAILEFYQQFACVGGDPVFSESLCKELQKKFFQQRCELGKIGRQNLNRRLNLDIPQNNTFLLPRDLLAAVDHLIGMKLGMGTLDDMSHLKNKRIRSVADLLQDQFGLALVRLENTVRGTICGAIRHKLIPTPQNLVTSTSLTTTYESFFGLHPLSQVLDRTNPLTQIVHGRKWSYLGPGGLTGRTASFRIRDIHPSHYGRICPIDTSEGINVGLMGSLAIHVKVGYWGSIESPFYGLSERSKEAQMVYLSPNRDEYYMVAAGNSLALNRDIQEQQVVPARYRQEFLTIAWEEIHLRSIFPFQYFSIGASLIPFIEHNDANRALMSSNMQRQAVPLSRSEKCIVGTGLEGQTALDSGVSVIAECKGKIIYTDTQKIFLSSNGDTLSIPLVMYQRSNKNTCMNQKTQVQRGKYIKKGQILAGGAATAGGELALGKNVLVAYMPWEGYNFEDAVLISERLVYKDIYTSFHIRKYEIQTHVTSQGPERITKEIPHLEARLLRNLDRNGIVMLGSWIETGDILVGKLTPQTASESSYAPEDRLLRAILGIQVSTSKETSLRLPIGGRGRVIDVRWIHRRGVSNSNPERIRVYISQKREIKVGDKVAGRHGNKGIISKILSRQDMPYLQDGTPVDMVFNPLGVPSRMNVGQIFECSLGLAGDLLKKHYRIGPFDERYEQEASRKLVFSELYEASKKTKNPWVFEPEYPGKSRIFDGRTGDLFEQPVLIGKSYILKLIHQVDDKIHGRSSGHYALVTQQPLRGRAKQGGQRVGEMEVWALEGFGVAHILQEMLTYKSDHIRARQEVLGAMIIGATVPNPESAPESFRLLVRELRSLSLELNHFLVSEKNFQMDRKEA.

It belongs to the RNA polymerase beta chain family. In plastids the minimal PEP RNA polymerase catalytic core is composed of four subunits: alpha, beta, beta', and beta''. When a (nuclear-encoded) sigma factor is associated with the core the holoenzyme is formed, which can initiate transcription.

It localises to the plastid. The protein localises to the chloroplast. It carries out the reaction RNA(n) + a ribonucleoside 5'-triphosphate = RNA(n+1) + diphosphate. Functionally, DNA-dependent RNA polymerase catalyzes the transcription of DNA into RNA using the four ribonucleoside triphosphates as substrates. The polypeptide is DNA-directed RNA polymerase subunit beta (Phalaenopsis aphrodite subsp. formosana (Moth orchid)).